The following is an 811-amino-acid chain: Probable glutamine--tRNA ligase (811 aa).

The disordered stretch occupies residues 190 to 217 (DAAAGKKKGAKAKNSKQKTVDSGKAKEQ). The segment covering 194 to 205 (GKKKGAKAKNSK) has biased composition (basic residues). Basic and acidic residues predominate over residues 207-217 (KTVDSGKAKEQ). The 'HIGH' region signature appears at 269–279 (PEPNGYLHIGH). ATP contacts are provided by residues 270-272 (EPN) and 276-282 (HIGHSKA). D302 and Y447 together coordinate L-glutamine. ATP-binding positions include T466, 495–496 (RL), and 503–505 (MSK). The 'KMSKS' region signature appears at 502-506 (LMSKR).

It belongs to the class-I aminoacyl-tRNA synthetase family.

It is found in the cytoplasm. The enzyme catalyses tRNA(Gln) + L-glutamine + ATP = L-glutaminyl-tRNA(Gln) + AMP + diphosphate. This Schizosaccharomyces pombe (strain 972 / ATCC 24843) (Fission yeast) protein is Probable glutamine--tRNA ligase (qrs1).